Here is a 122-residue protein sequence, read N- to C-terminus: uncharacterized protein (122 aa).

The stretch at 46–116 (KDLQKEVDDL…HQLENKRELN (71 aa)) forms a coiled coil.

This is an uncharacterized protein from Invertebrate iridescent virus 6 (IIV-6).